Here is a 504-residue protein sequence, read N- to C-terminus: Probable ergothioneine transporter EgtUBC (504 aa).

Residues 19 to 198 (MIEHIQISFI…LLAIIFDLIL (180 aa)) enclose the ABC transmembrane type-1 domain. The next 6 membrane-spanning stretches (helical) occupy residues 25-45 (ISFI…ILLT), 49-69 (TISE…SLAL), 70-90 (LGLM…ALVV), 145-165 (AMVL…GGLG), 178-198 (SLIL…DLIL), and 209-229 (LLMT…IPMF). The segment at 231–504 (QKGDKITLAG…DYLKAKGLIK (274 aa)) is ergothioneine binding domain.

The protein in the N-terminal section; belongs to the binding-protein-dependent transport system permease family. It in the C-terminal section; belongs to the OsmX family. In terms of assembly, the complex is probably composed of at least an ATP-binding protein (EgtUA) and a transmembrane protein (EgtUBC).

The protein localises to the membrane. In terms of biological role, part of an ABC transporter complex EgtU required for the uptake of ergothioneine (EGT), a natural low-molecular weight (LMW) thiol antioxidant. Responsible for the translocation of the substrate across the membrane. Also contains a C-terminal periplasmic solute-binding domain (SBD) which binds to EGT with sub-micromolar affinity. Probably does not bind L-hercynine. This is Probable ergothioneine transporter EgtUBC (egtUBC) from Staphylococcus aureus (strain USA300).